The following is a 559-amino-acid chain: 2-isopropylmalate synthase (559 aa).

The Pyruvate carboxyltransferase domain maps to 33-307; it reads PIWCSSDLRD…NPDLDFSDID (275 aa). The Mg(2+) site is built by aspartate 42, histidine 246, histidine 248, and asparagine 282. Residues 439–559 are regulatory domain; sequence ANTPYALVSH…SLSQPEAKAA (121 aa).

Belongs to the alpha-IPM synthase/homocitrate synthase family. LeuA type 2 subfamily. As to quaternary structure, homodimer. Requires Mg(2+) as cofactor.

The protein resides in the cytoplasm. It catalyses the reaction 3-methyl-2-oxobutanoate + acetyl-CoA + H2O = (2S)-2-isopropylmalate + CoA + H(+). It participates in amino-acid biosynthesis; L-leucine biosynthesis; L-leucine from 3-methyl-2-oxobutanoate: step 1/4. In terms of biological role, catalyzes the condensation of the acetyl group of acetyl-CoA with 3-methyl-2-oxobutanoate (2-ketoisovalerate) to form 3-carboxy-3-hydroxy-4-methylpentanoate (2-isopropylmalate). The protein is 2-isopropylmalate synthase of Pseudomonas fluorescens (strain Pf0-1).